The chain runs to 268 residues: Centromere protein Q (268 aa).

Positions 1–31 (MSGKANASKKNFEQLKRNPKRKKDNEEVVLS) are disordered. A Phosphoserine modification is found at Ser-31. Residues 170–203 (ELMTGNIQSLKNKIQILASEVEEEEERVKQIHQI) are a coiled coil. Ser-249 is subject to Phosphoserine.

It belongs to the CENP-Q/OKP1 family. Component of the CENPA-CAD complex, composed of CENPI, CENPK, CENPL, CENPO, CENPP, CENPQ, CENPR and CENPS. The CENPA-CAD complex interacts with the CENPA-NAC complex, at least composed of CENPA, CENPC, CENPH, CENPM, CENPN, CENPT and CENPU.

It is found in the nucleus. It localises to the chromosome. The protein resides in the centromere. Its function is as follows. Component of the CENPA-CAD (nucleosome distal) complex, a complex recruited to centromeres which is involved in assembly of kinetochore proteins, mitotic progression and chromosome segregation. May be involved in incorporation of newly synthesized CENPA into centromeres via its interaction with the CENPA-NAC complex. Plays an important role in chromosome congression and in the recruitment of CENP-O complex (which comprises CENPO, CENPP, CENPQ and CENPU), CENPE and PLK1 to the kinetochores. This is Centromere protein Q (CENPQ) from Macaca fascicularis (Crab-eating macaque).